A 439-amino-acid polypeptide reads, in one-letter code: Glucose-6-phosphate 1-dehydrogenase (439 aa).

Lysine 100 provides a ligand contact to NADP(+). Substrate contacts are provided by histidine 130, lysine 134, glutamate 168, and aspartate 187. The Proton acceptor role is filled by histidine 192. Position 288 (lysine 288) interacts with substrate.

This sequence belongs to the glucose-6-phosphate dehydrogenase family.

It catalyses the reaction D-glucose 6-phosphate + NADP(+) = 6-phospho-D-glucono-1,5-lactone + NADPH + H(+). It participates in carbohydrate degradation; pentose phosphate pathway; D-ribulose 5-phosphate from D-glucose 6-phosphate (oxidative stage): step 1/3. Catalyzes the oxidation of glucose 6-phosphate to 6-phosphogluconolactone. This Chlamydia trachomatis serovar D (strain ATCC VR-885 / DSM 19411 / UW-3/Cx) protein is Glucose-6-phosphate 1-dehydrogenase.